The sequence spans 788 residues: Ribonucleoside-diphosphate reductase subunit alpha (788 aa).

The ATP-cone domain occupies 2 to 92 (ITVVKRNGRI…LYDLYHKVSG (91 aa)). Residues Lys-6, 12 to 18 (EPLDITK), and Thr-52 each bind ATP. Thr-200 serves as a coordination point for GDP. Cys-216 and Cys-497 form a disulfide bridge. DTTP-binding positions include 223–225 (DNI) and Arg-253. Asn-424 is a GDP binding site. Asn-424 (proton acceptor) is an active-site residue. Cys-426 (cysteine radical intermediate) is an active-site residue. GDP contacts are provided by residues Glu-428 and 661–663 (SSI). Glu-428 (proton acceptor) is an active-site residue.

It belongs to the ribonucleoside diphosphate reductase large chain family. In terms of assembly, tetramer of two alpha and two beta subunits.

It carries out the reaction a 2'-deoxyribonucleoside 5'-diphosphate + [thioredoxin]-disulfide + H2O = a ribonucleoside 5'-diphosphate + [thioredoxin]-dithiol. With respect to regulation, under complex allosteric control mediated by deoxynucleoside triphosphates and ATP binding to separate specificity and activation sites on the alpha subunit. The type of nucleotide bound at the specificity site determines substrate preference. It seems probable that ATP makes the enzyme reduce CDP and UDP, dGTP favors ADP reduction and dTTP favors GDP reduction. Stimulated by ATP and inhibited by dATP binding to the activity site. In terms of biological role, provides the precursors necessary for DNA synthesis. Catalyzes the biosynthesis of deoxyribonucleotides from the corresponding ribonucleotides. This Helicobacter pylori (strain J99 / ATCC 700824) (Campylobacter pylori J99) protein is Ribonucleoside-diphosphate reductase subunit alpha (nrdA).